A 310-amino-acid polypeptide reads, in one-letter code: Carbamate kinase (310 aa).

The protein belongs to the carbamate kinase family.

The protein resides in the cytoplasm. It catalyses the reaction hydrogencarbonate + NH4(+) + ATP = carbamoyl phosphate + ADP + H2O + H(+). The protein operates within metabolic intermediate metabolism; carbamoyl phosphate degradation; CO(2) and NH(3) from carbamoyl phosphate: step 1/1. The sequence is that of Carbamate kinase (arcC) from Staphylococcus epidermidis (strain ATCC 35984 / DSM 28319 / BCRC 17069 / CCUG 31568 / BM 3577 / RP62A).